Reading from the N-terminus, the 312-residue chain is Putative mitochondrial transporter UCP3 (312 aa).

The Mitochondrial intermembrane portion of the chain corresponds to 1–10 (MVGLKPSDVP). A helical membrane pass occupies residues 11–32 (PTMAVKFLGAGTAACFADLVTF). Solcar repeat units follow at residues 11 to 105 (PTMA…VKQV), 114 to 206 (SSLT…LKEK), and 215 to 300 (DNFP…LKRA). Residues 33-76 (PLDTAKVRLQIQGENQAVQTARLVQYRGVLGTILTMVRTEGPCS) are Mitochondrial matrix-facing. Residues 77-99 (PYNGLVAGLQRQMSFASIRIGLY) form a helical membrane-spanning segment. At 100-119 (DSVKQVYTPKGADNSSLTTR) the chain is on the mitochondrial intermembrane side. Residues 120–136 (ILAGCTTGAMAVTCAQP) traverse the membrane as a helical segment. Topologically, residues 137 to 183 (TDVVKVRFQASIHLGPSRSDRKYSGTMDAYRTIAREEGVRGLWKGTL) are mitochondrial matrix. A helical membrane pass occupies residues 184–200 (PNIMRNAIVNCAEVVTY). Topologically, residues 201–217 (DILKEKLLDYHLLTDNF) are mitochondrial intermembrane. The chain crosses the membrane as a helical span at residues 218–237 (PCHFVSAFGAGFCATVVASP). The Mitochondrial matrix segment spans residues 238-271 (VDVVKTRYMNSPPGQYFSPLDCMIKMVAQEGPTA). The helical transmembrane segment at 272-294 (FYKGFTPSFLRLGSWNVVMFVTY) threads the bilayer. The segment at 279-301 (SFLRLGSWNVVMFVTYEQLKRAL) is purine nucleotide binding. The Mitochondrial intermembrane segment spans residues 295–312 (EQLKRALMKVQMLRESPF).

The protein belongs to the mitochondrial carrier (TC 2.A.29) family. In terms of assembly, interacts with HAX1; the interaction is direct and calcium-dependent. As to expression, only in skeletal muscle and heart. Also expressed in white and brown adipose tissues. Is more expressed in glycolytic than in oxidative skeletal muscles.

It is found in the mitochondrion inner membrane. Its activity is regulated as follows. The proton transporter activity is activated by fatty acids (in vitro). The proton transporter activity is inhibited by ATP and ADP (in vitro). The effect of Ubiquinone/coenzyme Q10 on the proton transporter activity in reconstituted membranes is unclear (in vitro). Putative transmembrane transporter that plays a role in mitochondrial metabolism via an as yet unclear mechanism. Originally, this mitochondrial protein was thought to act as a proton transmembrane transporter from the mitochondrial intermembrane space into the matrix, causing proton leaks through the inner mitochondrial membrane, thereby uncoupling mitochondrial membrane potential generation from ATP synthesis. However, this function is controversial and uncoupling may not be the function, or at least not the main function, but rather a consequence of more conventional metabolite transporter activity. The polypeptide is Putative mitochondrial transporter UCP3 (Homo sapiens (Human)).